Consider the following 490-residue polypeptide: Cytochrome P450 2C55 (490 aa).

Heme is bound at residue Cys-435.

This sequence belongs to the cytochrome P450 family. It depends on heme as a cofactor. In terms of tissue distribution, highest level in colon. Low levels in liver and small intestine.

The protein localises to the endoplasmic reticulum membrane. Its subcellular location is the microsome membrane. The enzyme catalyses an organic molecule + reduced [NADPH--hemoprotein reductase] + O2 = an alcohol + oxidized [NADPH--hemoprotein reductase] + H2O + H(+). In terms of biological role, metabolizes arachidonic acid mainly to 19-hydroxyeicosatetraenoic acid (HETE). The sequence is that of Cytochrome P450 2C55 from Mus musculus (Mouse).